The primary structure comprises 98 residues: Omega-hexatoxin-Hr2b (98 aa).

A signal peptide spans 1-22 (MKFSKLSLTLALILTQVLFVLC). Positions 24 to 56 (KINEDFMKHGLESQALHDEIRKPIDSENPDTER) are excised as a propeptide. 3 disulfide bridges follow: cysteine 60/cysteine 74, cysteine 67/cysteine 80, and cysteine 73/cysteine 85. Leucine 97 bears the Leucine amide mark.

The protein belongs to the neurotoxin 15 family. 02 (omega-actx) subfamily. Expressed by the venom gland.

It localises to the secreted. In terms of biological role, potent inhibitor of insect, but not mammalian, voltage-gated calcium channels (Cav). The chain is Omega-hexatoxin-Hr2b from Atrax robustus (Sydney funnel-web spider).